The sequence spans 131 residues: Fluoride-specific ion channel FluC 2 (131 aa).

4 helical membrane-spanning segments follow: residues serine 5 to isoleucine 25, tryptophan 35 to glycine 55, proline 59 to phenylalanine 79, and leucine 95 to valine 115. Positions 71 and 74 each coordinate Na(+).

The protein belongs to the fluoride channel Fluc/FEX (TC 1.A.43) family.

It is found in the cell membrane. It carries out the reaction fluoride(in) = fluoride(out). With respect to regulation, na(+) is not transported, but it plays an essential structural role and its presence is essential for fluoride channel function. Functionally, fluoride-specific ion channel. Important for reducing fluoride concentration in the cell, thus reducing its toxicity. The chain is Fluoride-specific ion channel FluC 2 from Bacillus subtilis (strain 168).